Reading from the N-terminus, the 566-residue chain is NAD-dependent malic enzyme (566 aa).

Y104 functions as the Proton donor in the catalytic mechanism. An NAD(+)-binding site is contributed by R157. The active-site Proton acceptor is the K175. E246, D247, and D270 together coordinate a divalent metal cation. 2 residues coordinate NAD(+): D270 and N419.

It belongs to the malic enzymes family. Homotetramer. Mg(2+) is required as a cofactor. It depends on Mn(2+) as a cofactor.

It catalyses the reaction (S)-malate + NAD(+) = pyruvate + CO2 + NADH. The enzyme catalyses oxaloacetate + H(+) = pyruvate + CO2. The sequence is that of NAD-dependent malic enzyme from Cronobacter sakazakii (strain ATCC BAA-894) (Enterobacter sakazakii).